Reading from the N-terminus, the 206-residue chain is Sec-independent protein translocase protein TatB (206 aa).

The chain crosses the membrane as a helical span at residues 1–21 (MFDIGWTELLVIAVVLIVVVG). The segment at 104-206 (ENKTEVPSAA…VQTKKKKDEA (103 aa)) is disordered. Residues 110–124 (PSAAMSAPTPSMSLP) show a composition bias toward low complexity. Positions 125–138 (ETPPVVPTPAPAPE) are enriched in pro residues. Low complexity-rich tracts occupy residues 139 to 151 (PAAV…AAKP) and 187 to 196 (ARKPAAPKTP).

The protein belongs to the TatB family. The Tat system comprises two distinct complexes: a TatABC complex, containing multiple copies of TatA, TatB and TatC subunits, and a separate TatA complex, containing only TatA subunits. Substrates initially bind to the TatABC complex, which probably triggers association of the separate TatA complex to form the active translocon.

It localises to the cell inner membrane. Its function is as follows. Part of the twin-arginine translocation (Tat) system that transports large folded proteins containing a characteristic twin-arginine motif in their signal peptide across membranes. Together with TatC, TatB is part of a receptor directly interacting with Tat signal peptides. TatB may form an oligomeric binding site that transiently accommodates folded Tat precursor proteins before their translocation. The protein is Sec-independent protein translocase protein TatB of Rhizobium etli (strain ATCC 51251 / DSM 11541 / JCM 21823 / NBRC 15573 / CFN 42).